Consider the following 413-residue polypeptide: Protein esc1 (413 aa).

Residues 1–22 (MSSYALPSMQPTPTSSIPLRQM) show a composition bias toward polar residues. 2 disordered regions span residues 1-202 (MSSY…NQPS) and 230-265 (MYVPQQQTSHSSGASYQNESANPPVQSPMQYSYSQG). The segment covering 23 to 42 (SQPTTSAPSNSASSTPYSPQ) has biased composition (low complexity). The span at 43–63 (QVPLTHNSYPLSTPSSFQHGQ) shows a compositional bias: polar residues. 2 stretches are compositionally biased toward low complexity: residues 86–103 (SAAPASSSPTSATLSTAA) and 116–126 (SSSSYVYSVPP). Over residues 127 to 136 (TNSTTSQASA) the composition is skewed to polar residues. The segment covering 150-197 (STTLTPSTTDSSSTDVSSSDSVSTSASSSNASNTVSVTSPASSSATPL) has biased composition (low complexity). The bHLH domain maps to 334–385 (ELRTSHKLAERKRRKEIKELFDDLKDALPLDKSTKSSKWGLLTRAIQYIEQL).

In terms of assembly, efficient DNA binding requires dimerization with another bHLH protein.

It is found in the nucleus. Functionally, involved in the sexual differentiation process. Modulate the ability of the cell to differentiate in response to the nitrogen starvation signal; in particular in response to decreases in the level of cellular cAMP. This Schizosaccharomyces pombe (strain 972 / ATCC 24843) (Fission yeast) protein is Protein esc1 (esc1).